Reading from the N-terminus, the 473-residue chain is N-lysine methyltransferase SETD6 (473 aa).

Residue K39 is modified to N6-methylated lysine; by autocatalysis. The SET domain occupies 60–286 (PPAQVAVSRQ…KGHEIFNTYG (227 aa)). 73-75 (AGY) is an S-adenosyl-L-methionine binding site. Substrate is bound at residue W122. K179 bears the N6-methylated lysine; by autocatalysis mark. Residue Y223 participates in S-adenosyl-L-methionine binding. Substrate contacts are provided by S224 and Q226. Residue 251-252 (NH) participates in S-adenosyl-L-methionine binding. 2 residues coordinate substrate: Y262 and Y297. Y297 serves as a coordination point for S-adenosyl-L-methionine. Position 372 is an N6-methylated lysine; by autocatalysis (K372).

Belongs to the class V-like SAM-binding methyltransferase superfamily. Histone-lysine methyltransferase family. SETD6 subfamily. In terms of assembly, monomer, homodimer and homotrimer; these structures are stabilized in the presence of S-adenosyl-L-methionine (SAM). Post-translationally, automethylated; Lys-39 and Lys-179 serve as the major automethylation sites.

The protein resides in the nucleus. It catalyses the reaction L-lysyl-[protein] + S-adenosyl-L-methionine = N(6)-methyl-L-lysyl-[protein] + S-adenosyl-L-homocysteine + H(+). The enzyme catalyses L-lysyl(8)-[histone H2AZ] + S-adenosyl-L-methionine = N(6)-methyl-L-lysyl(8)-[histone H2AZ] + S-adenosyl-L-homocysteine + H(+). With respect to regulation, activated by automethylation. Functionally, protein-lysine N-methyltransferase. Monomethylates 'Lys-310' of the RELA subunit of NF-kappa-B complex, leading to down-regulation of NF-kappa-B transcription factor activity. Monomethylates 'Lys-8' of H2AZ (H2AZK8me1). Required for the maintenance of embryonic stem cell self-renewal. Methylates PAK4. In Homo sapiens (Human), this protein is N-lysine methyltransferase SETD6.